A 312-amino-acid polypeptide reads, in one-letter code: Olfactory receptor 14C36 (312 aa).

Over 1-23 the chain is Extracellular; the sequence is MPNSTTVMEFLLMRFSDVWTLQI. N-linked (GlcNAc...) asparagine glycosylation is present at asparagine 3. The chain crosses the membrane as a helical span at residues 24–44; it reads LHSASFFMLYLVTLMGNILIV. The Cytoplasmic portion of the chain corresponds to 45 to 52; sequence TVTTCDSS. A helical membrane pass occupies residues 53 to 73; sequence LHMPMYFFLRNLSILDACYIS. Residues 74-97 lie on the Extracellular side of the membrane; that stretch reads VTVPTSCVNSLLDSTTISKAGCVA. Residues cysteine 95 and cysteine 187 are joined by a disulfide bond. The helical transmembrane segment at 98 to 118 threads the bilayer; that stretch reads QVFLVVFFVYVELLFLTIMAH. Over 119-137 the chain is Cytoplasmic; that stretch reads DRYVAVCQPLHYPVIVNSR. A helical membrane pass occupies residues 138–158; sequence ICIQMTLASLLSGLVYAGMHT. Residues 159–194 lie on the Extracellular side of the membrane; that stretch reads GSTFQLPFCRSNVIHQFFCDIPSLLKLSCSDTFSNE. The helical transmembrane segment at 195–215 threads the bilayer; that stretch reads VMIVVSALGVGGGCFIFIIRS. Over 216 to 235 the chain is Cytoplasmic; that stretch reads YIHIFSTVLGFPRGADRTKA. The helical transmembrane segment at 236-256 threads the bilayer; that stretch reads FSTCIPHILVVSVFLSSCSSV. The Extracellular segment spans residues 257–269; sequence YLRPPAIPAATQD. A helical membrane pass occupies residues 270-290; the sequence is LILSGFYSIMPPLFNPIIYSL. Topologically, residues 291 to 312 are cytoplasmic; that stretch reads RNKQIKVAIKKIMKRIFYSENV.

Belongs to the G-protein coupled receptor 1 family.

The protein resides in the cell membrane. Odorant receptor. The protein is Olfactory receptor 14C36 (OR14C36) of Homo sapiens (Human).